Consider the following 343-residue polypeptide: Replication initiation protein (343 aa).

The interval 42 to 61 (ERKRTKRRRGEHSTKPKCEN) is disordered.

Functionally, probably functions as an initiator for the IncI1 ColIb-P9 replicon. The polypeptide is Replication initiation protein (repZ) (Escherichia coli).